A 145-amino-acid chain; its full sequence is D-aminoacyl-tRNA deacylase (145 aa).

The Gly-cisPro motif, important for rejection of L-amino acids motif lies at 137–138; sequence GP.

This sequence belongs to the DTD family. In terms of assembly, homodimer.

Its subcellular location is the cytoplasm. The enzyme catalyses glycyl-tRNA(Ala) + H2O = tRNA(Ala) + glycine + H(+). It catalyses the reaction a D-aminoacyl-tRNA + H2O = a tRNA + a D-alpha-amino acid + H(+). Its function is as follows. An aminoacyl-tRNA editing enzyme that deacylates mischarged D-aminoacyl-tRNAs. Also deacylates mischarged glycyl-tRNA(Ala), protecting cells against glycine mischarging by AlaRS. Acts via tRNA-based rather than protein-based catalysis; rejects L-amino acids rather than detecting D-amino acids in the active site. By recycling D-aminoacyl-tRNA to D-amino acids and free tRNA molecules, this enzyme counteracts the toxicity associated with the formation of D-aminoacyl-tRNA entities in vivo and helps enforce protein L-homochirality. This chain is D-aminoacyl-tRNA deacylase, found in Legionella pneumophila (strain Paris).